Consider the following 383-residue polypeptide: 2-methylcitrate synthase 2 (383 aa).

Substrate is bound by residues arginine 73 and histidine 195. Histidine 230 is an active-site residue. 263-267 (VVMGF) contributes to the CoA binding site. Histidine 269 is a catalytic residue. Arginine 278 contacts substrate. Aspartate 320 is a catalytic residue. Substrate contacts are provided by arginine 345 and arginine 364.

Belongs to the citrate synthase family. As to quaternary structure, homodimer.

The enzyme catalyses propanoyl-CoA + oxaloacetate + H2O = (2S,3S)-2-methylcitrate + CoA + H(+). It catalyses the reaction oxaloacetate + acetyl-CoA + H2O = citrate + CoA + H(+). Its pathway is organic acid metabolism; propanoate degradation. The protein operates within carbohydrate metabolism; tricarboxylic acid cycle; isocitrate from oxaloacetate: step 1/2. Involved in the catabolism of short chain fatty acids (SCFA) via the tricarboxylic acid (TCA)(acetyl degradation route) and via the 2-methylcitrate cycle I (propionate degradation route). Catalyzes the Claisen condensation of propionyl-CoA and oxaloacetate (OAA) to yield 2-methylcitrate (2-MC) and CoA. Also catalyzes the condensation of oxaloacetate with acetyl-CoA but with a lower specificity. The protein is 2-methylcitrate synthase 2 (prpC2) of Corynebacterium glutamicum (strain ATCC 13032 / DSM 20300 / JCM 1318 / BCRC 11384 / CCUG 27702 / LMG 3730 / NBRC 12168 / NCIMB 10025 / NRRL B-2784 / 534).